The chain runs to 912 residues: Protein translocase subunit SecA (912 aa).

ATP-binding positions include glutamine 87, 105–109 (GEGKT), and aspartate 508. Residues 855-912 (QHQDAGGYGADEEVEQMQGGNAPVPVSQVTRDEPKVGRNDPCPCGSGKKYKHCHGQLS) are disordered. Cysteine 896, cysteine 898, cysteine 907, and histidine 908 together coordinate Zn(2+). Residues 902–912 (KKYKHCHGQLS) show a composition bias toward basic residues.

This sequence belongs to the SecA family. In terms of assembly, monomer and homodimer. Part of the essential Sec protein translocation apparatus which comprises SecA, SecYEG and auxiliary proteins SecDF-YajC and YidC. It depends on Zn(2+) as a cofactor.

The protein localises to the cell inner membrane. The protein resides in the cytoplasm. It catalyses the reaction ATP + H2O + cellular proteinSide 1 = ADP + phosphate + cellular proteinSide 2.. Part of the Sec protein translocase complex. Interacts with the SecYEG preprotein conducting channel. Has a central role in coupling the hydrolysis of ATP to the transfer of proteins into and across the cell membrane, serving both as a receptor for the preprotein-SecB complex and as an ATP-driven molecular motor driving the stepwise translocation of polypeptide chains across the membrane. The chain is Protein translocase subunit SecA from Xanthomonas campestris pv. campestris (strain B100).